The following is a 293-amino-acid chain: sn-glycerol-3-phosphate transport system permease protein UgpA (293 aa).

The next 6 membrane-spanning stretches (helical) occupy residues 10–30, 72–92, 108–128, 155–177, 204–224, and 261–281; these read ILPY…FFWP, VTVV…LLLA, LLIW…LFMF, AMGL…FFVA, IVFP…TVYA, and LGSS…LTAF. The ABC transmembrane type-1 domain maps to 66–282; sequence YLHSVQVTVV…AIVIALTAFQ (217 aa).

This sequence belongs to the binding-protein-dependent transport system permease family. As to quaternary structure, the complex is composed of two ATP-binding proteins (UgpC), two transmembrane proteins (UgpA and UgpE) and a solute-binding protein (UgpB).

The protein localises to the cell inner membrane. Part of the ABC transporter complex UgpBAEC involved in sn-glycerol-3-phosphate (G3P) import. Probably responsible for the translocation of the substrate across the membrane. The chain is sn-glycerol-3-phosphate transport system permease protein UgpA (ugpA) from Brucella suis biovar 1 (strain 1330).